Consider the following 327-residue polypeptide: Endochitinase CH5B (327 aa).

A signal peptide spans 1 to 26 (MKKNRMMIMICSVGVVWMLLVGGSYG). Positions 27–67 (EQCGRQAGGALCPGGNCCSQFGWCGSTTDYCGKDCQSQCGG) constitute a Chitin-binding type-1 domain. 7 disulfide bridges follow: Cys-29/Cys-44, Cys-38/Cys-50, Cys-43/Cys-57, Cys-61/Cys-65, Cys-96/Cys-158, Cys-169/Cys-177, and Cys-276/Cys-308. Residue Glu-140 is the Proton donor of the active site. Positions 317–327 (SLFLSDLVTSQ) are cleaved as a propeptide — removed in mature form.

Belongs to the glycosyl hydrolase 19 family. Chitinase class I subfamily.

It is found in the vacuole. It catalyses the reaction Random endo-hydrolysis of N-acetyl-beta-D-glucosaminide (1-&gt;4)-beta-linkages in chitin and chitodextrins.. Functionally, defense against chitin-containing fungal pathogens. The chain is Endochitinase CH5B from Phaseolus vulgaris (Kidney bean).